Consider the following 186-residue polypeptide: Nicotinamide-nucleotide adenylyltransferase (186 aa).

This sequence belongs to the archaeal NMN adenylyltransferase family.

It localises to the cytoplasm. The enzyme catalyses beta-nicotinamide D-ribonucleotide + ATP + H(+) = diphosphate + NAD(+). Its pathway is cofactor biosynthesis; NAD(+) biosynthesis; NAD(+) from nicotinamide D-ribonucleotide: step 1/1. The sequence is that of Nicotinamide-nucleotide adenylyltransferase from Pyrococcus abyssi (strain GE5 / Orsay).